Reading from the N-terminus, the 229-residue chain is Large ribosomal RNA subunit accumulation protein YCED homolog 2, chloroplastic (229 aa).

The transit peptide at 1 to 42 (MDVRCLISPNLLNSKIKVSGNTHHLPFSSLSKKHQASSPIQA) directs the protein to the chloroplast.

This sequence belongs to the DUF177 domain family.

The protein resides in the plastid. Its subcellular location is the chloroplast. May play a role in synthesis, processing and/or stability of 23S rRNA. The protein is Large ribosomal RNA subunit accumulation protein YCED homolog 2, chloroplastic of Arabidopsis thaliana (Mouse-ear cress).